The chain runs to 1219 residues: A disintegrin and metalloproteinase with thrombospondin motifs 18 (1219 aa).

The N-terminal stretch at 1–47 is a signal peptide; sequence MECALLCLCALRAAGPGPPWGPAGLGRLAKALQLCCFCCASVAVALA. The propeptide occupies 48 to 284; the sequence is SDSGSSGGSG…EYGGTGRPRR (237 aa). 2 N-linked (GlcNAc...) asparagine glycosylation sites follow: Asn151 and Asn190. The disordered stretch occupies residues 217–248; it reads YPGSQRTYPGHSPSHTPPASQSQEPEYSHRRW. The segment covering 218 to 241 has biased composition (polar residues); it reads PGSQRTYPGHSPSHTPPASQSQEP. Residues 293–498 enclose the Peptidase M12B domain; it reads LNVETLVVAD…PQAGCLVDEP (206 aa). 11 disulfides stabilise this stretch: Cys369/Cys420, Cys395/Cys402, Cys414/Cys493, Cys453/Cys477, Cys521/Cys546, Cys532/Cys553, Cys541/Cys572, Cys566/Cys577, Cys601/Cys638, Cys605/Cys643, and Cys616/Cys628. His436 is a Zn(2+) binding site. Glu437 is an active-site residue. Zn(2+) contacts are provided by His440 and His446. The region spanning 589–644 is the TSP type-1 1 domain; that stretch reads HGQWSAWSKWSECSRTCGGGVKFQERHCSNPKPQYGGKYCPGSSRIYKLCNINPCP. N-linked (GlcNAc...) asparagine glycans are attached at residues Asn745, Asn838, Asn865, and Asn909. TSP type-1 domains are found at residues 931–990, 991–1049, 1052–1116, and 1121–1176; these read CPAY…NSHA, CPPE…GRCP, NRLQ…RTCP, and AVAS…NFCP. Residues 1182 to 1219 form the PLAC domain; it reads DDPSCVDFFSWCHLVPQHGVCNHKFYGKQCCRSCTRKS.

Requires Zn(2+) as cofactor. In terms of processing, the precursor is cleaved by a furin endopeptidase. Glycosylated. Can be O-fucosylated by POFUT2 on a serine or a threonine residue found within the consensus sequence C1-X(2)-(S/T)-C2-G of the TSP type-1 repeat domains where C1 and C2 are the first and second cysteine residue of the repeat, respectively. Fucosylated repeats can then be further glycosylated by the addition of a beta-1,3-glucose residue by the glucosyltransferase, B3GALTL. Fucosylation mediates the efficient secretion of ADAMTS family members. Can also be C-glycosylated with one or two mannose molecules on tryptophan residues within the consensus sequence W-X-X-W of the TPRs, and N-glycosylated. These other glycosylations can also facilitate secretion.

It localises to the secreted. It is found in the extracellular space. Its subcellular location is the extracellular matrix. The sequence is that of A disintegrin and metalloproteinase with thrombospondin motifs 18 (Adamts18) from Mus musculus (Mouse).